Consider the following 162-residue polypeptide: Protein-export protein SecB (162 aa).

Belongs to the SecB family. Homotetramer, a dimer of dimers. One homotetramer interacts with 1 SecA dimer.

It is found in the cytoplasm. In terms of biological role, one of the proteins required for the normal export of preproteins out of the cell cytoplasm. It is a molecular chaperone that binds to a subset of precursor proteins, maintaining them in a translocation-competent state. It also specifically binds to its receptor SecA. The chain is Protein-export protein SecB from Pseudomonas syringae pv. syringae (strain B728a).